A 417-amino-acid chain; its full sequence is Serine hydroxymethyltransferase (417 aa).

Residues leucine 121 and 125-127 (GHL) each bind (6S)-5,6,7,8-tetrahydrofolate. Lysine 229 is subject to N6-(pyridoxal phosphate)lysine. 355–357 (SPF) contacts (6S)-5,6,7,8-tetrahydrofolate.

Belongs to the SHMT family. Homodimer. Pyridoxal 5'-phosphate serves as cofactor.

It is found in the cytoplasm. It catalyses the reaction (6R)-5,10-methylene-5,6,7,8-tetrahydrofolate + glycine + H2O = (6S)-5,6,7,8-tetrahydrofolate + L-serine. It participates in one-carbon metabolism; tetrahydrofolate interconversion. Its pathway is amino-acid biosynthesis; glycine biosynthesis; glycine from L-serine: step 1/1. Catalyzes the reversible interconversion of serine and glycine with tetrahydrofolate (THF) serving as the one-carbon carrier. This reaction serves as the major source of one-carbon groups required for the biosynthesis of purines, thymidylate, methionine, and other important biomolecules. Also exhibits THF-independent aldolase activity toward beta-hydroxyamino acids, producing glycine and aldehydes, via a retro-aldol mechanism. The polypeptide is Serine hydroxymethyltransferase (Aeromonas hydrophila subsp. hydrophila (strain ATCC 7966 / DSM 30187 / BCRC 13018 / CCUG 14551 / JCM 1027 / KCTC 2358 / NCIMB 9240 / NCTC 8049)).